Reading from the N-terminus, the 215-residue chain is Chaperone protein TorD (215 aa).

The protein belongs to the TorD/DmsD family. TorD subfamily.

It localises to the cytoplasm. Involved in the biogenesis of TorA. Acts on TorA before the insertion of the molybdenum cofactor and, as a result, probably favors a conformation of the apoenzyme that is competent for acquiring the cofactor. This chain is Chaperone protein TorD, found in Aliivibrio salmonicida (strain LFI1238) (Vibrio salmonicida (strain LFI1238)).